Here is a 220-residue protein sequence, read N- to C-terminus: Iron-sulfur cluster repair protein YtfE (220 aa).

The protein belongs to the RIC family. YtfE subfamily. As to quaternary structure, homodimer.

It is found in the cytoplasm. Di-iron-containing protein involved in the repair of iron-sulfur clusters damaged by oxidative and nitrosative stress conditions. The sequence is that of Iron-sulfur cluster repair protein YtfE from Salmonella paratyphi A (strain AKU_12601).